Here is a 329-residue protein sequence, read N- to C-terminus: GTPase Obg (329 aa).

Residues 1-159 (MQFIDQAIID…WSLQLELKLL (159 aa)) enclose the Obg domain. Positions 160 to 328 (AEVGIIGLPN…LLSSIWNELG (169 aa)) constitute an OBG-type G domain. ATP is bound by residues 166-173 (GLPNAGKS), 191-195 (FTTLI), 213-216 (DIPG), 280-283 (NKKE), and 309-311 (SAV). Serine 173 and threonine 193 together coordinate Mg(2+).

It belongs to the TRAFAC class OBG-HflX-like GTPase superfamily. OBG GTPase family. In terms of assembly, monomer. Requires Mg(2+) as cofactor.

Its subcellular location is the cytoplasm. Functionally, an essential GTPase which binds GTP, GDP and possibly (p)ppGpp with moderate affinity, with high nucleotide exchange rates and a fairly low GTP hydrolysis rate. Plays a role in control of the cell cycle, stress response, ribosome biogenesis and in those bacteria that undergo differentiation, in morphogenesis control. The protein is GTPase Obg of Prochlorococcus marinus (strain NATL2A).